Consider the following 177-residue polypeptide: MSRVGKKPVPVPAGVTATVDGQTVKVKGSKGELQFRVPDQVAVTHENGAISVQPRSQTKEARALWGLSRAQVANLVEGVTKGFEKKLEINGVGYRAAVAGKVLKLSLGYSHDIEYEIPAGITITTPRPVEIIVAGIDKQRVGQIAAEIREYRSPEPYKGKGVKYADEFIFRKEGKKK.

It belongs to the universal ribosomal protein uL6 family. Part of the 50S ribosomal subunit.

This protein binds to the 23S rRNA, and is important in its secondary structure. It is located near the subunit interface in the base of the L7/L12 stalk, and near the tRNA binding site of the peptidyltransferase center. The sequence is that of Large ribosomal subunit protein uL6 from Methylobacterium nodulans (strain LMG 21967 / CNCM I-2342 / ORS 2060).